A 208-amino-acid chain; its full sequence is FMN-dependent NADH:quinone oxidoreductase 1 (208 aa).

17-19 (SVS) serves as a coordination point for FMN.

It belongs to the azoreductase type 1 family. As to quaternary structure, homodimer. It depends on FMN as a cofactor.

The enzyme catalyses 2 a quinone + NADH + H(+) = 2 a 1,4-benzosemiquinone + NAD(+). It carries out the reaction N,N-dimethyl-1,4-phenylenediamine + anthranilate + 2 NAD(+) = 2-(4-dimethylaminophenyl)diazenylbenzoate + 2 NADH + 2 H(+). Functionally, quinone reductase that provides resistance to thiol-specific stress caused by electrophilic quinones. In terms of biological role, also exhibits azoreductase activity. Catalyzes the reductive cleavage of the azo bond in aromatic azo compounds to the corresponding amines. The chain is FMN-dependent NADH:quinone oxidoreductase 1 from Listeria monocytogenes serotype 4b (strain F2365).